The following is a 127-amino-acid chain: I-Kappa-B like protein J1 (127 aa).

ANK repeat units lie at residues 43–76 (HGNTCLHIATEEHRGRQAIWLIEKLVEYGADLDE) and 81–111 (DGDTVLHMAVKKGDYKLATWMCQQLSMRFGS).

It belongs to the polydnaviridae I-Kappa-B-like protein family.

Suppresses the host immune response through NF-kappa-B inactivation. Possesses ankyrin repeat domains required for NF-kappa-B binding but lacks the regulatory regions required for dissociation from NF-kappa-B and degradation. Therefore, prevents host NF-kappa-B release and subsequent activation. This chain is I-Kappa-B like protein J1 (J2), found in Microplitis demolitor (Parasitoid wasp).